The sequence spans 185 residues: MSTNKEEEHQIVCTQDFLRQYYVSESVSIQFGLNNKTIRTINEEEFNNAAMCIMTRTNYPESTLKRSASTYLLNSYHKKPATLSLPFVFGDTINLSEDMEDNNENNLLYSDTLYGDDSLTQRGDQVVYKIDTQEEDSSFTLLQSEANETRPLSSSSTPQILQSDYSVVMQEGQTSNGSIFQFSSP.

The tract at residues 146 to 168 (ANETRPLSSSSTPQILQSDYSVV) is disordered.

Its function is as follows. Potential transcriptional regulator that is required to activate expression of a number of early meiotic genes including HOP1. The polypeptide is Meiotic recombination protein REC104 (REC104) (Saccharomyces pastorianus (Lager yeast)).